The following is a 346-amino-acid chain: Holliday junction branch migration complex subunit RuvB (346 aa).

The tract at residues 4–185 (SDRIITASPF…FGIVSRLEFY (182 aa)) is large ATPase domain (RuvB-L). ATP contacts are provided by residues Leu-24, Arg-25, Gly-66, Lys-69, Thr-70, Thr-71, 132–134 (EDY), Arg-175, Tyr-185, and Arg-222. Thr-70 contributes to the Mg(2+) binding site. The tract at residues 186-256 (TADELGKIVT…VADAALQMLD (71 aa)) is small ATPAse domain (RuvB-S). A head domain (RuvB-H) region spans residues 259-346 (ATGLDVLDRK…TTVPSLFDPD (88 aa)). Residues Arg-295, Arg-314, and Arg-319 each coordinate DNA.

Belongs to the RuvB family. As to quaternary structure, homohexamer. Forms an RuvA(8)-RuvB(12)-Holliday junction (HJ) complex. HJ DNA is sandwiched between 2 RuvA tetramers; dsDNA enters through RuvA and exits via RuvB. An RuvB hexamer assembles on each DNA strand where it exits the tetramer. Each RuvB hexamer is contacted by two RuvA subunits (via domain III) on 2 adjacent RuvB subunits; this complex drives branch migration. In the full resolvosome a probable DNA-RuvA(4)-RuvB(12)-RuvC(2) complex forms which resolves the HJ.

Its subcellular location is the cytoplasm. The catalysed reaction is ATP + H2O = ADP + phosphate + H(+). The RuvA-RuvB-RuvC complex processes Holliday junction (HJ) DNA during genetic recombination and DNA repair, while the RuvA-RuvB complex plays an important role in the rescue of blocked DNA replication forks via replication fork reversal (RFR). RuvA specifically binds to HJ cruciform DNA, conferring on it an open structure. The RuvB hexamer acts as an ATP-dependent pump, pulling dsDNA into and through the RuvAB complex. RuvB forms 2 homohexamers on either side of HJ DNA bound by 1 or 2 RuvA tetramers; 4 subunits per hexamer contact DNA at a time. Coordinated motions by a converter formed by DNA-disengaged RuvB subunits stimulates ATP hydrolysis and nucleotide exchange. Immobilization of the converter enables RuvB to convert the ATP-contained energy into a lever motion, pulling 2 nucleotides of DNA out of the RuvA tetramer per ATP hydrolyzed, thus driving DNA branch migration. The RuvB motors rotate together with the DNA substrate, which together with the progressing nucleotide cycle form the mechanistic basis for DNA recombination by continuous HJ branch migration. Branch migration allows RuvC to scan DNA until it finds its consensus sequence, where it cleaves and resolves cruciform DNA. The chain is Holliday junction branch migration complex subunit RuvB from Nitrosomonas europaea (strain ATCC 19718 / CIP 103999 / KCTC 2705 / NBRC 14298).